A 118-amino-acid polypeptide reads, in one-letter code: Holo-[acyl-carrier-protein] synthase (118 aa).

Mg(2+) is bound by residues Asp8 and Glu58.

The protein belongs to the P-Pant transferase superfamily. AcpS family. It depends on Mg(2+) as a cofactor.

Its subcellular location is the cytoplasm. It carries out the reaction apo-[ACP] + CoA = holo-[ACP] + adenosine 3',5'-bisphosphate + H(+). Its function is as follows. Transfers the 4'-phosphopantetheine moiety from coenzyme A to a Ser of acyl-carrier-protein. In Streptococcus pyogenes serotype M28 (strain MGAS6180), this protein is Holo-[acyl-carrier-protein] synthase.